We begin with the raw amino-acid sequence, 1023 residues long: MSEIQVPESHWKHFLEWNRPLPPTKQTCIHHEIEAQAAAQPTKVAVASTVASLTYGDLNGMATRIASDLKRHGICPEKIVPLCFDKSPSMIVAMLAVLKAGGAFVALDPKAPSSRINVIMQQVNAKIVVTESKHRHLFSDYQIIEISTYDFMLPQTTDNYPSTRPSHPNDAAYLIFTSGSTGKPKAVVVEHQSFCSGMARHAPAQFIDRHSRVLQFASYTHDACIVEILTTLCMGGTICSPSEHERVNGLVQFINSQSVNWAVLTPSFITSIDHDEISTLETVVLAGERTLQSNISSWAGSVRLLTGYGVSECSVVTTISSPADENRSASHIGMPAGGVCWIVNPDDPDKLLPIGEVGEIIIEGPTVARGYLGNPEATERAFIQPPVWLHHVLEDPDHSSRLYRTGDLGRYNPDGSLDFVSRIGSQVKILGRRIELGEIEHHISNHPFVRQCMVQLPSMGDYHNQLVAVLELHTKPYVSLGDGSESNDLVQCNADTHKIESFLRTKVPEYMVPSFWFTIDHFPRLPSAKLDRNKVADLIAQLRLIGDASYGVVPEDDVIGRQIAREVTTMRLPQGQVLDPSISFQDTPLRKAGIDSIKAISLRKTLQRLWGVNIPVSCFMEQTARPTSIANHVRSAQDQGQGEYILPEPDLKGALDGLKRSLDVSMTTAPTRSSVSSGGKLSTLLTGGAGYLGQEILKTLLTAGRRVIVLVRACNISEGRKRFHNLPWWRSDFEDKLDVCLGDLSQPNLGIDQDLMERLGGHVQAVIHNGARVHWTECASDLWSVNVDATVTLLQFALSSSSVQRFVYISGGSAIGDSSDEWLVNARDGYSKTKLLAQALVEHCATKSEDLQLGLGMSIVKPGFIIGGPETGVANPSDYLWRYVASVVELGVYDESTTRARVPVSTLPLVAETIIRQISTASNRKHVEIIDESLRERDIWEVLRTLGYTLRPVSHRSWVTTIQDAMNKRREDHYLWPLASILEQQAYCLGDEKIQLGCKLKKKEYLKNAIQRNIQSLVSQGFI.

Residues 54-454 (TYGDLNGMAT…NHPFVRQCMV (401 aa)) form an adenylation region. One can recognise a Carrier domain in the interval 554-637 (PEDDVIGRQI…SIANHVRSAQ (84 aa)). Ser596 carries the O-(pantetheine 4'-phosphoryl)serine modification. Positions 685–901 (LTGGAGYLGQ…VYDESTTRAR (217 aa)) constitute a Thioester reductase (TE) domain.

The protein belongs to the NRP synthetase family. Requires pantetheine 4'-phosphate as cofactor.

It functions in the pathway secondary metabolite biosynthesis. NRPS-like oxidoreductasee; part of the fragmented gene cluster that mediates the biosynthesis of fusarochromene, a tryptophan-derived metabolite closely related to a group of mycotoxins including fusarochromanone. Within the pathway, fscA acts as an oxidoreductase that reduces the carboxyl group of 4-hydroxykyrunenine to primary alcohol. The first step of the pathway is the epimerization of L-tryptophan to D-tryptophan in the presence of the NRPS-like tryptophan epimerase fscC. D-tryptophan is subsequently hydroxylated by the tryptophan 6-hydroxylase fscE to yield 6-hydroxytryptophan. The pyrrole ring undergoes cleavaged by the tryptophan 2,3-dioxygenase fscD and is finally converted to 4-hydroxykyrunenine by the hydrolase fscH. The NRPS-like oxidoreductase fscA reduces the carboxyl group to primary alcohol and the DMATS-type prenyltransferase fscG performs prenylation, followed by the formation of a chromene ring catalyzed by the oxidoreductase fscI, which leads to desacetylfusarochromene. Epoxidation by fscF and rearrangement reactions of chromene double bonds convert compound desacetylfusarochromene to fusarochromanones. Although specific acetyltransferases were not found near the fsc gene cluster, several predicted enzymes containing the N-acetyltransferase superfamily domain are present in the genome of F.equiseti. These predicted enzymes may have the potential to convert desacetylfusarochromene to fusarochromene. This Fusarium equiseti (Fusarium scirpi) protein is NRPS-like oxidoreductase fscA.